The chain runs to 257 residues: Glucose-1-phosphate cytidylyltransferase (257 aa).

Residues 6 to 10, 11 to 13, lysine 23, serine 104, arginine 109, and glycine 128 each bind substrate; these read LAGGL and GTR. Mg(2+) contacts are provided by aspartate 129 and aspartate 234.

Belongs to the glucose-1-phosphate cytidylyltransferase family. In terms of assembly, homohexamer. The cofactor is Mg(2+).

The enzyme catalyses alpha-D-glucose 1-phosphate + CTP + H(+) = CDP-D-glucose + diphosphate. It functions in the pathway nucleotide-sugar biosynthesis; CDP-3,6-dideoxy-D-mannose biosynthesis; CDP-3,6-dideoxy-D-mannose from CTP and alpha-D-glucose 1-phosphate: step 1/5. Its pathway is bacterial outer membrane biogenesis; LPS O-antigen biosynthesis. Functionally, involved in the biosynthesis of the tyvelose, a 3,6-dideoxyhexose found in the O-antigen of the surface lipopolysaccharides. It catalyzes the transfer of a CMP moiety from CTP to glucose 1-phosphate. This enzyme can utilize either CTP or UTP as the nucleotide donor. The sequence is that of Glucose-1-phosphate cytidylyltransferase (rfbF) from Salmonella typhi.